Here is a 146-residue protein sequence, read N- to C-terminus: Large ribosomal subunit protein uL15 (146 aa).

A disordered region spans residues 1–56; that stretch reads MKLHELRAAEGANKASKRVGRGTGSGLGKTSGRGQNGQNSRSGGGVRPGFEGGQMP. 2 stretches are compositionally biased toward gly residues: residues 21 to 35 and 42 to 52; these read RGTG…GRGQ and SGGGVRPGFEG.

Belongs to the universal ribosomal protein uL15 family. In terms of assembly, part of the 50S ribosomal subunit.

Its function is as follows. Binds to the 23S rRNA. The polypeptide is Large ribosomal subunit protein uL15 (Clostridium botulinum (strain Okra / Type B1)).